The primary structure comprises 206 residues: Uridine kinase (206 aa).

9–16 provides a ligand contact to ATP; it reads GGSGSGKT.

The protein belongs to the uridine kinase family.

The protein localises to the cytoplasm. The enzyme catalyses uridine + ATP = UMP + ADP + H(+). It carries out the reaction cytidine + ATP = CMP + ADP + H(+). The protein operates within pyrimidine metabolism; CTP biosynthesis via salvage pathway; CTP from cytidine: step 1/3. Its pathway is pyrimidine metabolism; UMP biosynthesis via salvage pathway; UMP from uridine: step 1/1. The polypeptide is Uridine kinase (Borrelia duttonii (strain Ly)).